The chain runs to 160 residues: Large ribosomal subunit protein uL22c (160 aa).

Belongs to the universal ribosomal protein uL22 family. In terms of assembly, part of the 50S ribosomal subunit.

The protein resides in the plastid. Its subcellular location is the chloroplast. In terms of biological role, this protein binds specifically to 23S rRNA. Functionally, the globular domain of the protein is located near the polypeptide exit tunnel on the outside of the subunit, while an extended beta-hairpin is found that lines the wall of the exit tunnel in the center of the 70S ribosome. This chain is Large ribosomal subunit protein uL22c (rpl22), found in Panax ginseng (Korean ginseng).